Consider the following 1021-residue polypeptide: INO80 complex subunit D (1021 aa).

Residue K87 forms a Glycyl lysine isopeptide (Lys-Gly) (interchain with G-Cter in SUMO2) linkage. The residue at position 132 (S132) is a Phosphoserine. 5 disordered regions span residues 194–239, 514–570, 808–844, 911–940, and 976–1021; these read FSTP…PMQG, RGDN…SMPT, RQQY…PHTS, SLST…SVLP, and QLSS…PSPN. Residues 224–239 are compositionally biased toward polar residues; that stretch reads VCKSPQPQNTSLPMQG. Over residues 520-554 the composition is skewed to basic residues; that stretch reads KVQHQQQRKPRKKTKPPALTKKHKKKRRRGPRRPQ. A compositionally biased stretch (low complexity) spans 911–926; the sequence is SLSTPPTTSNSETTQP. Residues 931-940 are compositionally biased toward polar residues; it reads VTPSSSSVLP. A compositionally biased stretch (low complexity) spans 995–1014; the sequence is APPTGFTATGATATSTNNAS.

It belongs to the INO80D family. In terms of assembly, component of the chromatin remodeling INO80 complex; specifically part of a complex module associated with the N-terminus of INO80.

The protein localises to the nucleus. Functionally, putative regulatory component of the chromatin remodeling INO80 complex which is involved in transcriptional regulation, DNA replication and probably DNA repair. The chain is INO80 complex subunit D from Mus musculus (Mouse).